Here is a 256-residue protein sequence, read N- to C-terminus: Alcohol dehydrogenase (256 aa).

Residue 12–35 participates in NAD(+) binding; that stretch reads FVAGLGGIGLDTSKELVKRDLKNL. Position 140 (Ser140) interacts with substrate. Tyr153 functions as the Proton acceptor in the catalytic mechanism.

Belongs to the short-chain dehydrogenases/reductases (SDR) family. As to quaternary structure, homodimer.

The enzyme catalyses a primary alcohol + NAD(+) = an aldehyde + NADH + H(+). The catalysed reaction is a secondary alcohol + NAD(+) = a ketone + NADH + H(+). The chain is Alcohol dehydrogenase (Adh) from Drosophila orena (Fruit fly).